Here is a 275-residue protein sequence, read N- to C-terminus: Bis(5'-nucleosyl)-tetraphosphatase, symmetrical (275 aa).

Belongs to the Ap4A hydrolase family.

It catalyses the reaction P(1),P(4)-bis(5'-adenosyl) tetraphosphate + H2O = 2 ADP + 2 H(+). Hydrolyzes diadenosine 5',5'''-P1,P4-tetraphosphate to yield ADP. This chain is Bis(5'-nucleosyl)-tetraphosphatase, symmetrical, found in Actinobacillus succinogenes (strain ATCC 55618 / DSM 22257 / CCUG 43843 / 130Z).